A 174-amino-acid polypeptide reads, in one-letter code: Peptide deformylase (174 aa).

Residues C94 and H136 each contribute to the Fe cation site. Residue E137 is part of the active site. H140 contacts Fe cation.

It belongs to the polypeptide deformylase family. Fe(2+) serves as cofactor.

It catalyses the reaction N-terminal N-formyl-L-methionyl-[peptide] + H2O = N-terminal L-methionyl-[peptide] + formate. In terms of biological role, removes the formyl group from the N-terminal Met of newly synthesized proteins. Requires at least a dipeptide for an efficient rate of reaction. N-terminal L-methionine is a prerequisite for activity but the enzyme has broad specificity at other positions. This is Peptide deformylase from Rhizobium meliloti (strain 1021) (Ensifer meliloti).